A 294-amino-acid polypeptide reads, in one-letter code: MNGVINIYKNTGMTSFDVVAIVRRVAKMKKVGHTGTLDPAASGVLPVCLGKATKIIDYIMENKKVYRVNLKLGMVTDTYDLEGEVLREEDASHITKDEILNCINSFLGTIDQVPPMYSALKQNGVRLYELARQGIEVHREARKITIYSIENIKIESNDNIQMDVCCSKGTYIRSLCYDIGEKLNVGATMTALERIQNGTFTKEEAINIEDLTEELLEKHIISIEKALDSFEKITVNEKFGKLLRNGVKVFDNRMYSEEVEFNKLYRVYEDNGVFLGLGKRDEKGFKLEKLLIEE.

Catalysis depends on Asp38, which acts as the Nucleophile.

This sequence belongs to the pseudouridine synthase TruB family. Type 1 subfamily.

The enzyme catalyses uridine(55) in tRNA = pseudouridine(55) in tRNA. Its function is as follows. Responsible for synthesis of pseudouridine from uracil-55 in the psi GC loop of transfer RNAs. The polypeptide is tRNA pseudouridine synthase B (Clostridium perfringens (strain ATCC 13124 / DSM 756 / JCM 1290 / NCIMB 6125 / NCTC 8237 / Type A)).